The sequence spans 391 residues: MSTPTGQPIGLGLPDAPLPVLAPRRKTRQLMVGNVGVGSDYPVSVQSMTTTKTHDVNATLQQIAQLTASGCDIVRVACPKTVDAEALPAIAKKSPIPVIADIHFQPKYIFSAIDAGCAAVRVNPGNIKEFDGRVKEVAKAAGDAGIPIRIGVNAGSLDKRIMEKYGKATPEALVESALWEAGLFEDCGFGDIAISVKHNDPVIMVEAYRQLAAQSDYPLHLGVTEAGPAFQGTIKSSVAFGSLLSQGIGDTIRVSLSADPVEEIKVGDQILQSLNLRKRGLEIVSCPSCGRAQVDVYSLAEEVTAALDGMSIPLRVAVMGCVVNGPGEARDADLGVASGNGKGQIFVRGEVIKTVPESQIVETLIEEAVRLAEAEGLEIEEGAGPQVKITR.

The [4Fe-4S] cluster site is built by Cys-286, Cys-289, Cys-321, and Glu-328.

Belongs to the IspG family. Requires [4Fe-4S] cluster as cofactor.

It carries out the reaction (2E)-4-hydroxy-3-methylbut-2-enyl diphosphate + oxidized [flavodoxin] + H2O + 2 H(+) = 2-C-methyl-D-erythritol 2,4-cyclic diphosphate + reduced [flavodoxin]. It participates in isoprenoid biosynthesis; isopentenyl diphosphate biosynthesis via DXP pathway; isopentenyl diphosphate from 1-deoxy-D-xylulose 5-phosphate: step 5/6. Functionally, converts 2C-methyl-D-erythritol 2,4-cyclodiphosphate (ME-2,4cPP) into 1-hydroxy-2-methyl-2-(E)-butenyl 4-diphosphate. This Corynebacterium diphtheriae (strain ATCC 700971 / NCTC 13129 / Biotype gravis) protein is 4-hydroxy-3-methylbut-2-en-1-yl diphosphate synthase (flavodoxin).